A 484-amino-acid chain; its full sequence is Argininosuccinate lyase (484 aa).

The protein belongs to the lyase 1 family. Argininosuccinate lyase subfamily.

The protein localises to the cytoplasm. The catalysed reaction is 2-(N(omega)-L-arginino)succinate = fumarate + L-arginine. It functions in the pathway amino-acid biosynthesis; L-arginine biosynthesis; L-arginine from L-ornithine and carbamoyl phosphate: step 3/3. The sequence is that of Argininosuccinate lyase from Methanocaldococcus jannaschii (strain ATCC 43067 / DSM 2661 / JAL-1 / JCM 10045 / NBRC 100440) (Methanococcus jannaschii).